The following is a 398-amino-acid chain: Succinate--CoA ligase [ADP-forming] subunit beta (398 aa).

An ATP-grasp domain is found at 9–254; sequence KAVLREFGVP…ESEEDAKEIE (246 aa). ATP-binding positions include lysine 46, 53-55, glutamate 109, serine 112, and glutamate 117; that span reads GRG. Residues asparagine 209 and aspartate 223 each coordinate Mg(2+). Residues asparagine 274 and 331 to 333 each bind substrate; that span reads GIM.

Belongs to the succinate/malate CoA ligase beta subunit family. In terms of assembly, heterotetramer of two alpha and two beta subunits. Requires Mg(2+) as cofactor.

It catalyses the reaction succinate + ATP + CoA = succinyl-CoA + ADP + phosphate. The enzyme catalyses GTP + succinate + CoA = succinyl-CoA + GDP + phosphate. The protein operates within carbohydrate metabolism; tricarboxylic acid cycle; succinate from succinyl-CoA (ligase route): step 1/1. Functionally, succinyl-CoA synthetase functions in the citric acid cycle (TCA), coupling the hydrolysis of succinyl-CoA to the synthesis of either ATP or GTP and thus represents the only step of substrate-level phosphorylation in the TCA. The beta subunit provides nucleotide specificity of the enzyme and binds the substrate succinate, while the binding sites for coenzyme A and phosphate are found in the alpha subunit. In Rhodopseudomonas palustris (strain HaA2), this protein is Succinate--CoA ligase [ADP-forming] subunit beta.